Consider the following 83-residue polypeptide: Defensin-like protein 194 (83 aa).

The first 27 residues, 1 to 27 (MAMKSVSNFAIFLILFLVTSEISEIEA), serve as a signal peptide directing secretion. Cystine bridges form between Cys32-Cys78, Cys44-Cys68, Cys53-Cys73, and Cys57-Cys75.

The protein belongs to the DEFL family. Protease inhibitor I18 (RTI/MTI-2) subfamily.

Its subcellular location is the secreted. In Arabidopsis thaliana (Mouse-ear cress), this protein is Defensin-like protein 194 (ATTI3).